Here is a 120-residue protein sequence, read N- to C-terminus: Glycine cleavage system H protein (120 aa).

A Lipoyl-binding domain is found at 17–99 (VATVGITAHA…QGDGWLYRLK (83 aa)). Position 58 is an N6-lipoyllysine (Lys-58).

This sequence belongs to the GcvH family. In terms of assembly, the glycine cleavage system is composed of four proteins: P, T, L and H. Requires (R)-lipoate as cofactor.

In terms of biological role, the glycine cleavage system catalyzes the degradation of glycine. The H protein shuttles the methylamine group of glycine from the P protein to the T protein. The polypeptide is Glycine cleavage system H protein (Methylorubrum extorquens (strain PA1) (Methylobacterium extorquens)).